The primary structure comprises 119 residues: NADH-quinone oxidoreductase subunit A (119 aa).

3 helical membrane passes run 9–29 (IFLF…LGYI), 63–83 (LVAI…PWAV), and 88–108 (IGAL…VGFI).

This sequence belongs to the complex I subunit 3 family. In terms of assembly, NDH-1 is composed of 14 different subunits. Subunits NuoA, H, J, K, L, M, N constitute the membrane sector of the complex.

The protein localises to the cell inner membrane. The catalysed reaction is a quinone + NADH + 5 H(+)(in) = a quinol + NAD(+) + 4 H(+)(out). Functionally, NDH-1 shuttles electrons from NADH, via FMN and iron-sulfur (Fe-S) centers, to quinones in the respiratory chain. The immediate electron acceptor for the enzyme in this species is believed to be ubiquinone. Couples the redox reaction to proton translocation (for every two electrons transferred, four hydrogen ions are translocated across the cytoplasmic membrane), and thus conserves the redox energy in a proton gradient. The polypeptide is NADH-quinone oxidoreductase subunit A (Albidiferax ferrireducens (strain ATCC BAA-621 / DSM 15236 / T118) (Rhodoferax ferrireducens)).